Consider the following 93-residue polypeptide: Small ribosomal subunit protein uS19 (93 aa).

It belongs to the universal ribosomal protein uS19 family.

In terms of biological role, protein S19 forms a complex with S13 that binds strongly to the 16S ribosomal RNA. The protein is Small ribosomal subunit protein uS19 of Geotalea daltonii (strain DSM 22248 / JCM 15807 / FRC-32) (Geobacter daltonii).